Here is a 128-residue protein sequence, read N- to C-terminus: NADPH-dependent 7-cyano-7-deazaguanine reductase (128 aa).

Cys39 (thioimide intermediate) is an active-site residue. Catalysis depends on Asp46, which acts as the Proton donor. Residues 61 to 63 (IEL) and 80 to 81 (HE) contribute to the substrate site.

The protein belongs to the GTP cyclohydrolase I family. QueF type 1 subfamily.

It is found in the cytoplasm. The catalysed reaction is 7-aminomethyl-7-carbaguanine + 2 NADP(+) = 7-cyano-7-deazaguanine + 2 NADPH + 3 H(+). Its pathway is tRNA modification; tRNA-queuosine biosynthesis. In terms of biological role, catalyzes the NADPH-dependent reduction of 7-cyano-7-deazaguanine (preQ0) to 7-aminomethyl-7-deazaguanine (preQ1). This is NADPH-dependent 7-cyano-7-deazaguanine reductase from Magnetococcus marinus (strain ATCC BAA-1437 / JCM 17883 / MC-1).